We begin with the raw amino-acid sequence, 191 residues long: Flagellar transcriptional regulator FlhC (191 aa).

4 residues coordinate Zn(2+): Cys139, Cys142, Cys159, and Cys162.

The protein belongs to the FlhC family. Heterohexamer composed of two FlhC and four FlhD subunits. Each FlhC binds a FlhD dimer, forming a heterotrimer, and a hexamer assembles by dimerization of two heterotrimers. Zn(2+) is required as a cofactor.

The protein resides in the cytoplasm. Functionally, functions in complex with FlhD as a master transcriptional regulator that regulates transcription of several flagellar and non-flagellar operons by binding to their promoter region. Activates expression of class 2 flagellar genes, including fliA, which is a flagellum-specific sigma factor that turns on the class 3 genes. Also regulates genes whose products function in a variety of physiological pathways. The polypeptide is Flagellar transcriptional regulator FlhC (Enterobacter cloacae subsp. cloacae (strain ATCC 13047 / DSM 30054 / NBRC 13535 / NCTC 10005 / WDCM 00083 / NCDC 279-56)).